Reading from the N-terminus, the 271-residue chain is Short chain dehydrogenase virK (271 aa).

Leu13, Asp59, Asn87, Tyr168, Lys172, Val201, and Thr203 together coordinate NADP(+). Tyr168 functions as the Proton donor in the catalytic mechanism. Lys172 acts as the Lowers pKa of active site Tyr in catalysis.

It belongs to the short-chain dehydrogenases/reductases (SDR) family.

Its pathway is secondary metabolite biosynthesis. In terms of biological role, short chain dehydrogenase; part of the gene cluster that mediates the biosynthesis of virensols and trichoxide, fungal natural products that contain or are derived from a salicylaldehyde core. The pathway begins with the synthesis of the reduced chain in virensol C by the highly reducing polyketide synthase virA via condensation of one acetate and 8 malonate units. VirA has interesting programming rules since the first 2 ketides are fully reduced, the 3 following ketides undergo beta-dehydration, and the last 3 ketides are only reduced to beta-hydroxys to yield the trihydroxy portion. The production of aldehyde virensol C by virA alone is surprising, since virA does not contain a reductase (R) domain that is typically associated with reductive product release in HRPKS. The cupin-domain enzyme virC is involved in enhancing virA product turnover. The short-chain dehydrogenase virB then oxidizes the C-7 alcohol of virensol C to a ketone, yielding virensol D. Virensol D is further transformed to salicylaldehyde 5-deoxyaurocitrin by the short-chain dehydrogenase virD. VirD catalyzes the dehydrogenation of C-3 to form the beta-ketone aldehyde, which is followed by the generation of the nucleophilic C-2 that is required for the intramolecular aldol condensation between C-2 and C-7, itself followed by dehydration and aromatization which leads to salicylaldehyde 5-deoxyaurocitrin. While the dehydrogenation of virensol D is definitely catalyzed by virD, the aldol condensation and dehydration may be uncatalyzed or assisted by virD. The short chain dehydrogenase virG then converts salicylaldehyde 5-deoxyaurocitrin into virensol B which is further hydroxylated by the cytochrome P450 monooxygenase virE to yield the hydroquinone virensol A. VirI then may oxidize virensol A to form the quinone, while virH performs the epoxidation. Finally, the two remaining short-chain dehydrogenases, virK and virL, are probably responsible for reducing the ketones to the corresponding alcohols to furnish the epoxycyclohexanol structure in trichoxide. The sequence is that of Short chain dehydrogenase virK from Hypocrea virens (strain Gv29-8 / FGSC 10586) (Gliocladium virens).